The sequence spans 752 residues: Translation initiation factor IF-2 (752 aa).

The segment at 26–167 (RQGMGVKSHM…QPTQRKDKPL (142 aa)) is disordered. Over residues 34–47 (HMSSVTPDQAQQLR) the composition is skewed to polar residues. Residues 72–81 (KQNNHQAQNH) show a composition bias toward low complexity. Basic and acidic residues predominate over residues 83 to 96 (QHHDHDKTQNERPQ). Polar residues predominate over residues 101–129 (SRSNNGTKDNNQHQNNGGRFGGSLNNDQG). Residues 131–150 (NGKRFNKKNKKNKKHNKNKR) show a composition bias toward basic residues. Over residues 151 to 167 (LREVAHKQPTQRKDKPL) the composition is skewed to basic and acidic residues. Residues 253-422 (TRPAVVTVMG…LLQAEMLELK (170 aa)) enclose the tr-type G domain. The G1 stretch occupies residues 262 to 269 (GHVDHGKT). 262 to 269 (GHVDHGKT) is a GTP binding site. Positions 287-291 (GITQE) are G2. Residues 308-311 (DTPG) are G3. Residues 308–312 (DTPGH) and 362–365 (NKID) each bind GTP. The G4 stretch occupies residues 362–365 (NKID). Positions 398–400 (SAK) are G5.

This sequence belongs to the TRAFAC class translation factor GTPase superfamily. Classic translation factor GTPase family. IF-2 subfamily.

Its subcellular location is the cytoplasm. One of the essential components for the initiation of protein synthesis. Protects formylmethionyl-tRNA from spontaneous hydrolysis and promotes its binding to the 30S ribosomal subunits. Also involved in the hydrolysis of GTP during the formation of the 70S ribosomal complex. The sequence is that of Translation initiation factor IF-2 from Limosilactobacillus reuteri (strain DSM 20016) (Lactobacillus reuteri).